The primary structure comprises 598 residues: Aspartate--tRNA ligase (598 aa).

Position 173 (glutamate 173) interacts with L-aspartate. The tract at residues 197-200 is aspartate; it reads QLFK. Arginine 219 contacts L-aspartate. Residues 219-221 and glutamine 228 each bind ATP; that span reads RDE. Residue histidine 449 participates in L-aspartate binding. Residue glutamate 483 coordinates ATP. Residue arginine 490 participates in L-aspartate binding. 535-538 is a binding site for ATP; the sequence is GLDR.

The protein belongs to the class-II aminoacyl-tRNA synthetase family. Type 1 subfamily. Homodimer.

The protein localises to the cytoplasm. The catalysed reaction is tRNA(Asp) + L-aspartate + ATP = L-aspartyl-tRNA(Asp) + AMP + diphosphate. Functionally, catalyzes the attachment of L-aspartate to tRNA(Asp) in a two-step reaction: L-aspartate is first activated by ATP to form Asp-AMP and then transferred to the acceptor end of tRNA(Asp). The protein is Aspartate--tRNA ligase of Shewanella halifaxensis (strain HAW-EB4).